Here is an 86-residue protein sequence, read N- to C-terminus: MAHKKGLGSSRNGRDSNAQRLGVKAFGGETVTGGTIIVRQRGTRIKPGLNVGRGKDDTLFAKADGRVEFKDRGNLGRFVSIVPAKA.

The protein belongs to the bacterial ribosomal protein bL27 family.

This chain is Large ribosomal subunit protein bL27, found in Koribacter versatilis (strain Ellin345).